Consider the following 100-residue polypeptide: Small ribosomal subunit protein uS14 (100 aa).

It belongs to the universal ribosomal protein uS14 family. As to quaternary structure, part of the 30S ribosomal subunit. Contacts proteins S3 and S10.

Binds 16S rRNA, required for the assembly of 30S particles and may also be responsible for determining the conformation of the 16S rRNA at the A site. This is Small ribosomal subunit protein uS14 from Trichormus variabilis (strain ATCC 29413 / PCC 7937) (Anabaena variabilis).